A 78-amino-acid chain; its full sequence is Large ribosomal subunit protein bL28 (78 aa).

Positions 1-20 (MSRVCQVTGKRPVTGNNRSH) are disordered.

Belongs to the bacterial ribosomal protein bL28 family.

This is Large ribosomal subunit protein bL28 from Vibrio parahaemolyticus serotype O3:K6 (strain RIMD 2210633).